The primary structure comprises 191 residues: Protein NUCLEAR FUSION DEFECTIVE 2 (191 aa).

The signal sequence occupies residues 1–29 (MATLRFTLLLLVFVVGIFFSFSSVSHVRA). The RNase III domain occupies 48–167 (LAKLQTQIGY…IFGAIAIDAG (120 aa)).

Functionally, required for karyogamy during female gametophyte development, when the two polar nuclei fuse to form the diploid central cell nucleus. This Arabidopsis thaliana (Mouse-ear cress) protein is Protein NUCLEAR FUSION DEFECTIVE 2.